The sequence spans 634 residues: Probable LRR receptor-like serine/threonine-protein kinase At2g23950 (634 aa).

A signal peptide spans 1 to 27; that stretch reads MVVMKLITMKIFSVLLLLCFFVTCSLS. The Extracellular segment spans residues 28–236; the sequence is SEPRNPEVEA…SSGRRTNILA (209 aa). Asn-96 and Asn-109 each carry an N-linked (GlcNAc...) asparagine glycan. 4 LRR repeats span residues 99 to 121, 123 to 145, 147 to 167, and 171 to 193; these read NLRQ…ICSL, KLQT…VNQL, NLQY…ASLS, and HLSF…PART. A glycan (N-linked (GlcNAc...) asparagine) is linked at Asn-155. The helical transmembrane segment at 237 to 257 threads the bilayer; that stretch reads VALGVSLGFAVSVILSLGFIW. At 258 to 634 the chain is on the cytoplasmic side; the sequence is YRKKQRRLTM…SFAMELSGPR (377 aa). Residue Thr-296 is modified to Phosphothreonine. The region spanning 299-554 is the Protein kinase domain; that stretch reads FSSKSILGAG…QVALLCTQFL (256 aa). 305–313 contributes to the ATP binding site; that stretch reads LGAGGFGNV. Thr-322 is subject to Phosphothreonine. Position 327 (Lys-327) interacts with ATP. Phosphoserine occurs at positions 380 and 383. Phosphothreonine is present on Thr-395. Asp-422 functions as the Proton acceptor in the catalytic mechanism. Residues Thr-455, Thr-456, and Thr-461 each carry the phosphothreonine modification. Tyr-469 bears the Phosphotyrosine mark. Ser-471 is modified (phosphoserine). Thr-472 is subject to Phosphothreonine. The residue at position 476 (Ser-476) is a Phosphoserine. Thr-551 is modified (phosphothreonine).

Belongs to the protein kinase superfamily. Ser/Thr protein kinase family.

The protein resides in the membrane. The catalysed reaction is L-seryl-[protein] + ATP = O-phospho-L-seryl-[protein] + ADP + H(+). It catalyses the reaction L-threonyl-[protein] + ATP = O-phospho-L-threonyl-[protein] + ADP + H(+). In Arabidopsis thaliana (Mouse-ear cress), this protein is Probable LRR receptor-like serine/threonine-protein kinase At2g23950.